The sequence spans 572 residues: 2-succinyl-5-enolpyruvyl-6-hydroxy-3-cyclohexene-1-carboxylate synthase (572 aa).

The protein belongs to the TPP enzyme family. MenD subfamily. Homodimer. Mg(2+) is required as a cofactor. It depends on Mn(2+) as a cofactor. Requires thiamine diphosphate as cofactor.

It catalyses the reaction isochorismate + 2-oxoglutarate + H(+) = 5-enolpyruvoyl-6-hydroxy-2-succinyl-cyclohex-3-ene-1-carboxylate + CO2. The protein operates within quinol/quinone metabolism; 1,4-dihydroxy-2-naphthoate biosynthesis; 1,4-dihydroxy-2-naphthoate from chorismate: step 2/7. It participates in quinol/quinone metabolism; menaquinone biosynthesis. Functionally, catalyzes the thiamine diphosphate-dependent decarboxylation of 2-oxoglutarate and the subsequent addition of the resulting succinic semialdehyde-thiamine pyrophosphate anion to isochorismate to yield 2-succinyl-5-enolpyruvyl-6-hydroxy-3-cyclohexene-1-carboxylate (SEPHCHC). In Vibrio campbellii (strain ATCC BAA-1116), this protein is 2-succinyl-5-enolpyruvyl-6-hydroxy-3-cyclohexene-1-carboxylate synthase.